A 488-amino-acid chain; its full sequence is Cobyric acid synthase (488 aa).

The GATase cobBQ-type domain occupies 252 to 440 (VPLIAVLRFP…VHGLFANDRQ (189 aa)). Cys334 serves as the catalytic Nucleophile. The active site involves His432.

The protein belongs to the CobB/CobQ family. CobQ subfamily.

The protein operates within cofactor biosynthesis; adenosylcobalamin biosynthesis. Catalyzes amidations at positions B, D, E, and G on adenosylcobyrinic A,C-diamide. NH(2) groups are provided by glutamine, and one molecule of ATP is hydrogenolyzed for each amidation. This chain is Cobyric acid synthase, found in Methylorubrum populi (strain ATCC BAA-705 / NCIMB 13946 / BJ001) (Methylobacterium populi).